A 298-amino-acid polypeptide reads, in one-letter code: Leucine-rich repeat-containing protein 55 (298 aa).

The N-terminal stretch at 1-34 is a signal peptide; it reads MGDTWAQLPWPGPPHSALLLVFFLLAAGVMHSDA. In terms of domain architecture, LRRNT spans 35-65; that stretch reads GASCPVLCTCRNQVVDCSNQRLFSVPPDLPM. 2 cysteine pairs are disulfide-bonded: Cys-38–Cys-44 and Cys-42–Cys-51. LRR repeat units follow at residues 66–87, 90–111, 114–135, 138–160, and 163–186; these read DTRN…YLTC, ELRV…LFLH, RLAH…MFRE, GLVH…AFQG, and HLRD…EGLP. The LRRCT domain occupies 196–251; that stretch reads NPWVCGCTMEPLLKWLRNRIQRCTADSQLAECRGPPEVEGAPLFSLTEESFKACHL. 2 disulfide bridges follow: Cys-200–Cys-227 and Cys-202–Cys-249. The chain crosses the membrane as a helical span at residues 259–279; sequence LFIAFVGFVVSIASVATNFLL.

Interacts with KCNMA1.

The protein resides in the cell membrane. Auxiliary protein of the large-conductance, voltage and calcium-activated potassium channel (BK alpha). Modulates gating properties by producing a marked shift in the BK channel's voltage dependence of activation in the hyperpolarizing direction, and in the absence of calcium. This chain is Leucine-rich repeat-containing protein 55 (Lrrc55), found in Rattus norvegicus (Rat).